A 141-amino-acid polypeptide reads, in one-letter code: VLSPADKTNVKSTWDKIGGHAGEYGGEALERTFASFPTTKTYFPHFDLSHGSAQVKAHGKKVADALTNAVAHMDDLPGAMSALSDLHAYKLRVDPVNFKLLSHCLLVTLACHHPAEFTPAVHASLDKFFSAVSTVLTSKYR.

In terms of domain architecture, Globin spans 1-141 (VLSPADKTNV…VSTVLTSKYR (141 aa)). Residue Ser3 is modified to Phosphoserine. N6-succinyllysine is present on Lys7. Thr8 is modified (phosphothreonine). Lys11 is modified (N6-succinyllysine). Lys16 carries the post-translational modification N6-acetyllysine; alternate. Residue Lys16 is modified to N6-succinyllysine; alternate. Phosphotyrosine is present on Tyr24. Residue Ser35 is modified to Phosphoserine. The residue at position 40 (Lys40) is an N6-succinyllysine. At Ser49 the chain carries Phosphoserine. His58 is a binding site for O2. Residue His87 coordinates heme b. Ser102 is subject to Phosphoserine. A Phosphothreonine modification is found at Thr108. At Ser124 the chain carries Phosphoserine. 2 positions are modified to phosphothreonine: Thr134 and Thr137. Phosphoserine is present on Ser138.

It belongs to the globin family. Heterotetramer of two alpha chains and two beta chains. Red blood cells.

In terms of biological role, involved in oxygen transport from the lung to the various peripheral tissues. The chain is Hemoglobin subunit alpha-1/2 from Mustela lutreola (European mink).